The chain runs to 130 residues: Fumarate reductase subunit D (130 aa).

3 consecutive transmembrane segments (helical) span residues 35-55 (FAMITPITVLVLGILAPLGVI), 67-87 (SFATSIIGALFIIGTLALPMW), and 110-130 (IACYGFATIISALAVVFIFMI).

It belongs to the FrdD family. As to quaternary structure, part of an enzyme complex containing four subunits: a flavoprotein (FrdA), an iron-sulfur protein (FrdB), and two hydrophobic anchor proteins (FrdC and FrdD).

It localises to the cell inner membrane. Its function is as follows. Anchors the catalytic components of the fumarate reductase complex to the cell membrane, binds quinones. This chain is Fumarate reductase subunit D, found in Vibrio cholerae serotype O1 (strain M66-2).